We begin with the raw amino-acid sequence, 1002 residues long: Probable transport protein MmpL10 (1002 aa).

A run of 12 helical transmembrane segments spans residues 1–21 (MVGCWVALALVLPMAVPSLAE), 177–197 (IAVMLLVILMVIYRNPVTMLL), 199–219 (LVTIGASLMTAQALVAGVSLV), 228–248 (AIVLLSAMIAGAGTDYAVFLI), 268–288 (AMMSVGKVIAASAATVGITFL), 306–326 (AIGIAVSFLAAVTLLPAILVL), 358–378 (YLGASLIGLVALASCASLAHF), 806–826 (IVAVTVVVVILILMALLRAIV), 835–855 (VVISYMSAIGLGVVVFQVFLG), 862–882 (VPGLAFVVLVAVGADYNMLLA), 901–921 (VRCTGGVITAAGLIFAASMSG), and 923–943 (LFSSIGTVVQGGFIIGVGILI).

It belongs to the resistance-nodulation-cell division (RND) (TC 2.A.6) family. MmpL subfamily.

It is found in the cell membrane. This Mycobacterium bovis (strain ATCC BAA-935 / AF2122/97) protein is Probable transport protein MmpL10 (mmpL10).